Consider the following 369-residue polypeptide: 4-hydroxy-3-methylbut-2-en-1-yl diphosphate synthase (flavodoxin) (369 aa).

Residues C270, C273, C305, and E312 each coordinate [4Fe-4S] cluster.

It belongs to the IspG family. [4Fe-4S] cluster is required as a cofactor.

The catalysed reaction is (2E)-4-hydroxy-3-methylbut-2-enyl diphosphate + oxidized [flavodoxin] + H2O + 2 H(+) = 2-C-methyl-D-erythritol 2,4-cyclic diphosphate + reduced [flavodoxin]. It participates in isoprenoid biosynthesis; isopentenyl diphosphate biosynthesis via DXP pathway; isopentenyl diphosphate from 1-deoxy-D-xylulose 5-phosphate: step 5/6. In terms of biological role, converts 2C-methyl-D-erythritol 2,4-cyclodiphosphate (ME-2,4cPP) into 1-hydroxy-2-methyl-2-(E)-butenyl 4-diphosphate. The chain is 4-hydroxy-3-methylbut-2-en-1-yl diphosphate synthase (flavodoxin) from Pseudomonas putida (strain W619).